Here is a 972-residue protein sequence, read N- to C-terminus: uncharacterized protein (972 aa).

The N-terminal stretch at 1–21 is a signal peptide; sequence MTNMILLSAVFLSLAILETHC. Residues 22–932 lie on the Extracellular side of the membrane; sequence ANHISTGIST…KELGEKLYHV (911 aa). Positions 892–912 are disordered; the sequence is EPTVTTTTESPPPPTTTTRQI. Residues 933 to 953 traverse the membrane as a helical segment; that stretch reads LFFMGVLTVSVAGGVIILSFI. Residues 954 to 972 lie on the Cytoplasmic side of the membrane; the sequence is GCLIMRKMEDAPQKTKYSV.

It is found in the host membrane. This is an uncharacterized protein from Magallana gigas (Pacific oyster).